The following is a 370-amino-acid chain: Phosphate acyltransferase (370 aa).

This sequence belongs to the PlsX family. As to quaternary structure, homodimer. Probably interacts with PlsY.

It localises to the cytoplasm. It carries out the reaction a fatty acyl-[ACP] + phosphate = an acyl phosphate + holo-[ACP]. It participates in lipid metabolism; phospholipid metabolism. In terms of biological role, catalyzes the reversible formation of acyl-phosphate (acyl-PO(4)) from acyl-[acyl-carrier-protein] (acyl-ACP). This enzyme utilizes acyl-ACP as fatty acyl donor, but not acyl-CoA. In Polaromonas naphthalenivorans (strain CJ2), this protein is Phosphate acyltransferase.